Reading from the N-terminus, the 217-residue chain is CLA biosynthesis enone reductase (217 aa).

The FMN site is built by R20, S22, and R24. C51 contacts 10-oxooctadecanoate. Residues N78 and Q81 each contribute to the FMN site. R118 serves as a coordination point for 10-oxooctadecanoate. FMN is bound by residues N165, S168, G169, and R206.

It belongs to the nitroreductase family. In terms of assembly, homodimer. Requires FMN as cofactor.

It carries out the reaction 10-oxo-(11E)-octadecenoate + NADH + H(+) = 10-oxooctadecanoate + NAD(+). It functions in the pathway lipid metabolism; fatty acid metabolism. Is involved in a saturation metabolic pathway of polyunsaturated fatty acids, that detoxifies unsaturated fatty acids and generates hydroxy fatty acids, oxo fatty acids, conjugated fatty acids such as conjugated linoleic acids (CLAs), and partially saturated trans-fatty acids as intermediates. CLA-ER catalyzes the saturation of the carbon-carbon double bond in 10-oxo-(11E)-octadecenoate to produce 10-oxooctadecanoate, during linoleate metabolism. As part of the gut microbiome, this enzyme modifies host fatty acid composition and is expected to improve human health by altering lipid metabolism related to the onset of metabolic syndrome. In Lactiplantibacillus plantarum (Lactobacillus plantarum), this protein is CLA biosynthesis enone reductase.